The chain runs to 362 residues: Peptide chain release factor 1 (362 aa).

Glutamine 237 is modified (N5-methylglutamine).

Belongs to the prokaryotic/mitochondrial release factor family. In terms of processing, methylated by PrmC. Methylation increases the termination efficiency of RF1.

The protein localises to the cytoplasm. Its function is as follows. Peptide chain release factor 1 directs the termination of translation in response to the peptide chain termination codons UAG and UAA. The protein is Peptide chain release factor 1 of Vibrio vulnificus (strain CMCP6).